Here is a 258-residue protein sequence, read N- to C-terminus: Thiazole synthase (258 aa).

Residue Lys97 is the Schiff-base intermediate with DXP of the active site. 1-deoxy-D-xylulose 5-phosphate contacts are provided by residues Gly158, 184–185 (AG), and 206–207 (NT).

It belongs to the ThiG family. As to quaternary structure, homotetramer. Forms heterodimers with either ThiH or ThiS.

The protein resides in the cytoplasm. It catalyses the reaction [ThiS sulfur-carrier protein]-C-terminal-Gly-aminoethanethioate + 2-iminoacetate + 1-deoxy-D-xylulose 5-phosphate = [ThiS sulfur-carrier protein]-C-terminal Gly-Gly + 2-[(2R,5Z)-2-carboxy-4-methylthiazol-5(2H)-ylidene]ethyl phosphate + 2 H2O + H(+). The protein operates within cofactor biosynthesis; thiamine diphosphate biosynthesis. Its function is as follows. Catalyzes the rearrangement of 1-deoxy-D-xylulose 5-phosphate (DXP) to produce the thiazole phosphate moiety of thiamine. Sulfur is provided by the thiocarboxylate moiety of the carrier protein ThiS. In vitro, sulfur can be provided by H(2)S. This is Thiazole synthase from Bacteroides fragilis (strain ATCC 25285 / DSM 2151 / CCUG 4856 / JCM 11019 / LMG 10263 / NCTC 9343 / Onslow / VPI 2553 / EN-2).